We begin with the raw amino-acid sequence, 447 residues long: Na(+)-translocating NADH-quinone reductase subunit A (447 aa).

This sequence belongs to the NqrA family. In terms of assembly, composed of six subunits; NqrA, NqrB, NqrC, NqrD, NqrE and NqrF.

The catalysed reaction is a ubiquinone + n Na(+)(in) + NADH + H(+) = a ubiquinol + n Na(+)(out) + NAD(+). Functionally, NQR complex catalyzes the reduction of ubiquinone-1 to ubiquinol by two successive reactions, coupled with the transport of Na(+) ions from the cytoplasm to the periplasm. NqrA to NqrE are probably involved in the second step, the conversion of ubisemiquinone to ubiquinol. The chain is Na(+)-translocating NADH-quinone reductase subunit A from Haemophilus influenzae (strain PittGG).